Reading from the N-terminus, the 80-residue chain is MLSKEKIARINELANKAKVEELSAKEKVEQQELRKEYLEAFRGGMRHHIEGMKVVDQEGTDVTPEKLKKIQREKGLHNRK.

The tract at residues 60-80 (TDVTPEKLKKIQREKGLHNRK) is disordered. Over residues 63–80 (TPEKLKKIQREKGLHNRK) the composition is skewed to basic and acidic residues.

This sequence belongs to the UPF0291 family.

It localises to the cytoplasm. The chain is UPF0291 protein EF_1580 from Enterococcus faecalis (strain ATCC 700802 / V583).